The sequence spans 344 residues: Phosphoribosylformylglycinamidine cyclo-ligase (344 aa).

The protein belongs to the AIR synthase family.

It is found in the cytoplasm. The catalysed reaction is 2-formamido-N(1)-(5-O-phospho-beta-D-ribosyl)acetamidine + ATP = 5-amino-1-(5-phospho-beta-D-ribosyl)imidazole + ADP + phosphate + H(+). Its pathway is purine metabolism; IMP biosynthesis via de novo pathway; 5-amino-1-(5-phospho-D-ribosyl)imidazole from N(2)-formyl-N(1)-(5-phospho-D-ribosyl)glycinamide: step 2/2. This chain is Phosphoribosylformylglycinamidine cyclo-ligase, found in Haemophilus influenzae (strain PittEE).